Here is a 136-residue protein sequence, read N- to C-terminus: Small ribosomal subunit protein uS9 (136 aa).

The interval 95 to 136 (GLSPDNRKPLKTEGHLSRDPRSKERKKYGLKKARKAGQFSKR) is disordered. Residues 99–116 (DNRKPLKTEGHLSRDPRS) show a composition bias toward basic and acidic residues. Over residues 117–136 (KERKKYGLKKARKAGQFSKR) the composition is skewed to basic residues.

The protein belongs to the universal ribosomal protein uS9 family.

This is Small ribosomal subunit protein uS9 from Prochlorococcus marinus subsp. pastoris (strain CCMP1986 / NIES-2087 / MED4).